Here is a 210-residue protein sequence, read N- to C-terminus: Imidazole glycerol phosphate synthase subunit HisH (210 aa).

One can recognise a Glutamine amidotransferase type-1 domain in the interval 3–208 (PIAIIDYGMG…GELVRHAGNA (206 aa)). C81 functions as the Nucleophile in the catalytic mechanism. Catalysis depends on residues H183 and E185.

In terms of assembly, heterodimer of HisH and HisF.

The protein resides in the cytoplasm. It carries out the reaction 5-[(5-phospho-1-deoxy-D-ribulos-1-ylimino)methylamino]-1-(5-phospho-beta-D-ribosyl)imidazole-4-carboxamide + L-glutamine = D-erythro-1-(imidazol-4-yl)glycerol 3-phosphate + 5-amino-1-(5-phospho-beta-D-ribosyl)imidazole-4-carboxamide + L-glutamate + H(+). The catalysed reaction is L-glutamine + H2O = L-glutamate + NH4(+). The protein operates within amino-acid biosynthesis; L-histidine biosynthesis; L-histidine from 5-phospho-alpha-D-ribose 1-diphosphate: step 5/9. In terms of biological role, IGPS catalyzes the conversion of PRFAR and glutamine to IGP, AICAR and glutamate. The HisH subunit catalyzes the hydrolysis of glutamine to glutamate and ammonia as part of the synthesis of IGP and AICAR. The resulting ammonia molecule is channeled to the active site of HisF. The chain is Imidazole glycerol phosphate synthase subunit HisH from Moorella thermoacetica (strain ATCC 39073 / JCM 9320).